A 339-amino-acid polypeptide reads, in one-letter code: Putative phosphate acyltransferase (339 aa).

Belongs to the PlsX family. Homodimer. Probably interacts with PlsY.

Its subcellular location is the cytoplasm. It carries out the reaction a fatty acyl-[ACP] + phosphate = an acyl phosphate + holo-[ACP]. Its pathway is lipid metabolism; phospholipid metabolism. In terms of biological role, catalyzes the reversible formation of acyl-phosphate (acyl-PO(4)) from acyl-[acyl-carrier-protein] (acyl-ACP). This enzyme utilizes acyl-ACP as fatty acyl donor, but not acyl-CoA. This Clostridium perfringens (strain 13 / Type A) protein is Putative phosphate acyltransferase.